The sequence spans 841 residues: Copper-transporting P-type ATPase (841 aa).

Transmembrane regions (helical) follow at residues 186-206 (LWVS…PMLG), 218-238 (ATFI…LPFF), 256-276 (IGLG…APGI), 285-305 (GAAV…VFVG), 445-465 (AVFV…WAAI), and 474-494 (GLLA…GLAT). The 4-aspartylphosphate intermediate role is filled by D530. Helical transmembrane passes span 602–622 (GIAD…DLGI) and 638–658 (GKTV…AVAD). D729 and D733 together coordinate Mg(2+). The next 2 membrane-spanning stretches (helical) occupy residues 742–762 (VGIA…ITLV) and 800–820 (VAAG…IAAA).

It belongs to the cation transport ATPase (P-type) (TC 3.A.3) family. Type IB subfamily.

The protein resides in the cell membrane. The enzyme catalyses Cu(2+)(in) + ATP + H2O = Cu(2+)(out) + ADP + phosphate + H(+). Involved in copper efflux. The chain is Copper-transporting P-type ATPase (actP) from Rhizobium leguminosarum bv. viciae.